The chain runs to 823 residues: Trimethylamine-N-oxide reductase (823 aa).

A signal peptide (tat-type signal) is located at residues 1–32 (MKQSRRQFLKNMSAMAATFAMPNFLIAQNAFA). Residue Ser-181 participates in Mo-bis(molybdopterin guanine dinucleotide) binding.

Belongs to the prokaryotic molybdopterin-containing oxidoreductase family. Requires Mo-bis(molybdopterin guanine dinucleotide) as cofactor. Post-translationally, predicted to be exported by the Tat system. The position of the signal peptide cleavage has not been experimentally proven.

The protein localises to the periplasm. It carries out the reaction trimethylamine + 2 Fe(III)-[cytochrome c] + H2O = trimethylamine N-oxide + 2 Fe(II)-[cytochrome c] + 3 H(+). Functionally, reduces trimethylamine-N-oxide (TMAO) into trimethylamine; an anaerobic reaction coupled to energy-yielding reactions. This chain is Trimethylamine-N-oxide reductase (torA), found in Pasteurella multocida (strain Pm70).